The primary structure comprises 361 residues: 3,6-anhydro-alpha-L-galactonate cycloisomerase (361 aa).

The active-site Proton acceptor is Lys-166. Residues Asp-195, Glu-221, and Glu-247 each coordinate Mg(2+). His-297 (proton donor/acceptor) is an active-site residue.

The protein belongs to the mandelate racemase/muconate lactonizing enzyme family. The cofactor is Mg(2+).

The enzyme catalyses 3,6-anhydro-L-galactonate = 2-dehydro-3-deoxy-L-galactonate. Its function is as follows. Involved in the degradation of 3,6-anhydro-L-galactose, which is the major monomeric sugar of red macroalgae. Catalyzes the isomerization of 3,6-anhydrogalactonate (AHGA) to 2-keto-3-deoxy-galactonate (KDGal). This Streptomyces coelicolor (strain ATCC BAA-471 / A3(2) / M145) protein is 3,6-anhydro-alpha-L-galactonate cycloisomerase.